A 100-amino-acid polypeptide reads, in one-letter code: Urease subunit gamma (100 aa).

This sequence belongs to the urease gamma subunit family. In terms of assembly, heterotrimer of UreA (gamma), UreB (beta) and UreC (alpha) subunits. Three heterotrimers associate to form the active enzyme.

It localises to the cytoplasm. The catalysed reaction is urea + 2 H2O + H(+) = hydrogencarbonate + 2 NH4(+). Its pathway is nitrogen metabolism; urea degradation; CO(2) and NH(3) from urea (urease route): step 1/1. This is Urease subunit gamma from Verminephrobacter eiseniae (strain EF01-2).